A 237-amino-acid polypeptide reads, in one-letter code: Uridylate kinase (237 aa).

12–15 (KLSG) is a binding site for ATP. Residue glycine 53 participates in UMP binding. ATP contacts are provided by glycine 54 and arginine 58. UMP is bound by residues aspartate 73 and 134–141 (TGNPYFTT). ATP is bound by residues threonine 161, tyrosine 167, and aspartate 170.

It belongs to the UMP kinase family. In terms of assembly, homohexamer.

The protein resides in the cytoplasm. It catalyses the reaction UMP + ATP = UDP + ADP. The protein operates within pyrimidine metabolism; CTP biosynthesis via de novo pathway; UDP from UMP (UMPK route): step 1/1. Inhibited by UTP. Functionally, catalyzes the reversible phosphorylation of UMP to UDP. This chain is Uridylate kinase, found in Rhizorhabdus wittichii (strain DSM 6014 / CCUG 31198 / JCM 15750 / NBRC 105917 / EY 4224 / RW1) (Sphingomonas wittichii).